We begin with the raw amino-acid sequence, 248 residues long: Sugar fermentation stimulation protein homolog (248 aa).

It belongs to the SfsA family.

This chain is Sugar fermentation stimulation protein homolog, found in Methylorubrum extorquens (strain PA1) (Methylobacterium extorquens).